Consider the following 75-residue polypeptide: MKGETPVNSTMSIGQARKMVEQLKIEASLCRIKVSKAAADLMTYCDAHACEDPLITPVPTSENPFREKKFFCALL.

Phosphothreonine is present on Thr-5. Ser-9 carries the post-translational modification Phosphoserine. At Thr-10 the chain carries Phosphothreonine. Ser-12 bears the Phosphoserine mark. Position 72 is a cysteine methyl ester (Cys-72). Cys-72 carries S-geranylgeranyl cysteine lipidation. A propeptide spans 73–75 (ALL) (removed in mature form).

The protein belongs to the G protein gamma family. G proteins are composed of 3 units, alpha, beta and gamma. Forms a complex with GNAO1 and GNB1. Interacts with SCN8A. In terms of tissue distribution, abundantly expressed in brain. Low levels in testis.

Its subcellular location is the cell membrane. Its function is as follows. Guanine nucleotide-binding proteins (G proteins) are involved as a modulator or transducer in various transmembrane signaling systems. The beta and gamma chains are required for the GTPase activity, for replacement of GDP by GTP, and for G protein-effector interaction. This Bos taurus (Bovine) protein is Guanine nucleotide-binding protein G(I)/G(S)/G(O) subunit gamma-3 (GNG3).